A 257-amino-acid polypeptide reads, in one-letter code: 1-(5-phosphoribosyl)-5-[(5-phosphoribosylamino)methylideneamino] imidazole-4-carboxamide isomerase (257 aa).

Asp8 functions as the Proton acceptor in the catalytic mechanism. Asp129 (proton donor) is an active-site residue.

It belongs to the HisA/HisF family.

It localises to the cytoplasm. It catalyses the reaction 1-(5-phospho-beta-D-ribosyl)-5-[(5-phospho-beta-D-ribosylamino)methylideneamino]imidazole-4-carboxamide = 5-[(5-phospho-1-deoxy-D-ribulos-1-ylimino)methylamino]-1-(5-phospho-beta-D-ribosyl)imidazole-4-carboxamide. It functions in the pathway amino-acid biosynthesis; L-histidine biosynthesis; L-histidine from 5-phospho-alpha-D-ribose 1-diphosphate: step 4/9. The polypeptide is 1-(5-phosphoribosyl)-5-[(5-phosphoribosylamino)methylideneamino] imidazole-4-carboxamide isomerase (Crocosphaera subtropica (strain ATCC 51142 / BH68) (Cyanothece sp. (strain ATCC 51142))).